The primary structure comprises 301 residues: Cell division protein kinase 2 homolog CRK1 (301 aa).

The Protein kinase domain maps to 5-297 (YERQEKIGEG…AADALNHPYF (293 aa)). Residues 11–19 (IGEGTYGVV) and Lys34 each bind ATP. The active-site Proton acceptor is Asp127. Phosphothreonine; by CAK is present on Thr160.

Belongs to the protein kinase superfamily. CMGC Ser/Thr protein kinase family. CDC2/CDKX subfamily. As to quaternary structure, forms a stable but non-covalent complex with a regulatory subunit and with a cyclin.

The catalysed reaction is [DNA-directed RNA polymerase] + ATP = phospho-[DNA-directed RNA polymerase] + ADP + H(+). Its activity is regulated as follows. Phosphorylation at Thr-15 or Tyr-16 inactivates the enzyme, while phosphorylation at Thr-160 activates it. Functionally, may be involved in some stage-specific role in the promastigote cell cycle. The polypeptide is Cell division protein kinase 2 homolog CRK1 (CRK1) (Leishmania mexicana).